Here is a 490-residue protein sequence, read N- to C-terminus: MAGRKENPVLTACQAPSGRITRAQAAANRGRFGFAPSVSLPARTERKQTAKGKTKRGALDEITSASTATSAPQPKRRTVLKDVTNIGCANSSKNCTTTSKLQQKSKPTQRVKQIPSKKQCAKKVPKLPPPAVAGTSFVIDSKSSEETQKVELLAKAEEPTNLFENEGLLSLQNIERNRDSNCHEAFFEARNAMDKHELADSKPGDSSGLGFIDIDNDNGNPQMCASYASEIYTNLMASELIRRPRSNYMEALQRDITKGMRGILIDWLVEVSEEYKLVPDTLYLTINLIDRFLSQHYIERQKLQLLGITSMLIASKYEEICAPRVEEFCFITDNTYTKAEVLKMEGLVLNDMGFHLSVPTTKTFLRRFLRAAQASRNVPSITLGYLANYLAELTLIDYSFLKFLPSVVAASAVFLARWTLDQSDIPWNHTLEHYTSYKSSDIQICVCALRELQHNTSNCPLNAIREKYRQQKFECVANLTSPELGQSLFS.

The interval 34-76 is disordered; sequence FAPSVSLPARTERKQTAKGKTKRGALDEITSASTATSAPQPKR. Polar residues predominate over residues 63-72; that stretch reads TSASTATSAP.

Belongs to the cyclin family. Cyclin AB subfamily.

This chain is Cyclin-A2-1 (CYCA2-1), found in Oryza sativa subsp. japonica (Rice).